The following is a 64-amino-acid chain: Large ribosomal subunit protein bL35 (64 aa).

The disordered stretch occupies residues 1–23 (MPKMKTKSGAAKRFKKTANGFKH).

It belongs to the bacterial ribosomal protein bL35 family.

This is Large ribosomal subunit protein bL35 from Stutzerimonas stutzeri (strain A1501) (Pseudomonas stutzeri).